We begin with the raw amino-acid sequence, 885 residues long: Alanine--tRNA ligase (885 aa).

Positions 563, 567, 677, and 681 each coordinate Zn(2+). The interval 848–868 (LGGKGGGGRPDRAQGGAPSLA) is disordered.

This sequence belongs to the class-II aminoacyl-tRNA synthetase family. It depends on Zn(2+) as a cofactor.

The protein resides in the cytoplasm. The enzyme catalyses tRNA(Ala) + L-alanine + ATP = L-alanyl-tRNA(Ala) + AMP + diphosphate. In terms of biological role, catalyzes the attachment of alanine to tRNA(Ala) in a two-step reaction: alanine is first activated by ATP to form Ala-AMP and then transferred to the acceptor end of tRNA(Ala). Also edits incorrectly charged Ser-tRNA(Ala) and Gly-tRNA(Ala) via its editing domain. This Paracoccus denitrificans (strain Pd 1222) protein is Alanine--tRNA ligase.